Here is a 261-residue protein sequence, read N- to C-terminus: MRVALGIEYDGSRYFGWQRQAEVDSVQAQLERALSFVANEPISIQCAGRTDAGVHATGQVVHFETNAVRKESAWTLGVNVNLPDDIAVRWAKDVDDEFHARFTATARRYRYMIYNHQFRPGILRSGVSHYPGQIDEAKMHEAAQFLLGEQDFTSFRAIQCQSNTPFRCVHEVNVTRQGMYICVDIKANAFLHHMVRNIVGSLLEVGYGRQPVSWIKELLALKDRTQAAATAKPNGLYLVDVTYPEHYALPKLALGPLFMLD.

The Nucleophile role is filled by aspartate 51. A substrate-binding site is contributed by tyrosine 109.

Belongs to the tRNA pseudouridine synthase TruA family. Homodimer.

It carries out the reaction uridine(38/39/40) in tRNA = pseudouridine(38/39/40) in tRNA. In terms of biological role, formation of pseudouridine at positions 38, 39 and 40 in the anticodon stem and loop of transfer RNAs. The sequence is that of tRNA pseudouridine synthase A from Shewanella loihica (strain ATCC BAA-1088 / PV-4).